The sequence spans 58 residues: Small ribosomal subunit protein bS21 (58 aa).

The protein belongs to the bacterial ribosomal protein bS21 family.

The sequence is that of Small ribosomal subunit protein bS21 from Staphylococcus aureus (strain bovine RF122 / ET3-1).